The sequence spans 186 residues: MAGLTDLQRLQARVEELERWVYGPGGARGSRKVADGLVKVQVALGNISSKRERVKILYKKIEDLIKYLDPEYIDRIAIPDASKLQFILAEEQFILSQVALLEQVNALVPMLDSAHIKAVPEHAARLQRLAQIHIQQQDQCVEITEESKALLEEYNKTTMLLSKQFVQWDELLCQLEAATQVKPAEE.

At Ala-2 the chain carries N-acetylalanine. A coiled-coil region spans residues 135–157 (QQQDQCVEITEESKALLEEYNKT).

The protein belongs to the dynactin subunit 3 family. As to quaternary structure, subunit of dynactin, a multiprotein complex part of a tripartite complex with dynein and a adapter, such as BICDL1, BICD2 or HOOK3. The dynactin complex is built around ACTR1A/ACTB filament and consists of an actin-related filament composed of a shoulder domain, a pointed end and a barbed end. Its length is defined by its flexible shoulder domain. The soulder is composed of 2 DCTN1 subunits, 4 DCTN2 and 2 DCTN3. The 4 DCNT2 (via N-terminus) bind the ACTR1A filament and act as molecular rulers to determine the length. The pointed end is important for binding dynein-dynactin cargo adapters. Consists of 4 subunits: ACTR10, DCNT4, DCTN5 and DCTN6. The barbed end is composed of a CAPZA1:CAPZB heterodimers, which binds ACTR1A/ACTB filament and dynactin and stabilizes dynactin. Ubiquitously expressed. Highly expressed in muscle and pancreas and detected at lower levels in brain.

The protein resides in the cytoplasm. Its subcellular location is the cytoskeleton. It is found in the microtubule organizing center. It localises to the centrosome. The protein localises to the chromosome. The protein resides in the centromere. Its subcellular location is the kinetochore. It is found in the spindle. It localises to the cleavage furrow. The protein localises to the midbody. Part of the dynactin complex that activates the molecular motor dynein for ultra-processive transport along microtubules. Together with dynein may be involved in spindle assembly and cytokinesis. In Homo sapiens (Human), this protein is Dynactin subunit 3.